Reading from the N-terminus, the 101-residue chain is NAD(P)H-quinone oxidoreductase subunit 4L (101 aa).

3 helical membrane passes run 3 to 23 (LRYF…GLIT), 30 to 50 (VLMS…AFSN), and 64 to 84 (VFVI…VLAI).

The protein belongs to the complex I subunit 4L family. In terms of assembly, NDH-1 can be composed of about 15 different subunits; different subcomplexes with different compositions have been identified which probably have different functions.

The protein localises to the cellular thylakoid membrane. It carries out the reaction a plastoquinone + NADH + (n+1) H(+)(in) = a plastoquinol + NAD(+) + n H(+)(out). The catalysed reaction is a plastoquinone + NADPH + (n+1) H(+)(in) = a plastoquinol + NADP(+) + n H(+)(out). In terms of biological role, NDH-1 shuttles electrons from an unknown electron donor, via FMN and iron-sulfur (Fe-S) centers, to quinones in the respiratory and/or the photosynthetic chain. The immediate electron acceptor for the enzyme in this species is believed to be plastoquinone. Couples the redox reaction to proton translocation, and thus conserves the redox energy in a proton gradient. Cyanobacterial NDH-1 also plays a role in inorganic carbon-concentration. In Nostoc sp. (strain PCC 7120 / SAG 25.82 / UTEX 2576), this protein is NAD(P)H-quinone oxidoreductase subunit 4L.